The chain runs to 908 residues: Translation initiation factor IF-2 (908 aa).

Disordered stretches follow at residues 122–180 and 203–267; these read PVVE…VDDA and EKAR…AVKK. The segment covering 132 to 143 has biased composition (acidic residues); sequence VAAEPEVVEAPE. The span at 157-166 shows a compositional bias: low complexity; it reads EEPAAPAAPV. A compositionally biased stretch (basic and acidic residues) spans 223-248; sequence AKEDARPTKHVEDLAKLKKPHDKKDE. The span at 256–267 shows a compositional bias: basic residues; that stretch reads KHNKKAGKAVKK. The tr-type G domain occupies 409-578; the sequence is PRAPIVTVMG…ALQAELLELS (170 aa). The tract at residues 418-425 is G1; it reads GHVDHGKT. Position 418–425 (418–425) interacts with GTP; that stretch reads GHVDHGKT. A G2 region spans residues 443–447; it reads GITQH. The tract at residues 464 to 467 is G3; the sequence is DTPG. GTP contacts are provided by residues 464–468 and 518–521; these read DTPGH and NKMD. The tract at residues 518-521 is G4; it reads NKMD. The interval 554 to 556 is G5; the sequence is SAH.

The protein belongs to the TRAFAC class translation factor GTPase superfamily. Classic translation factor GTPase family. IF-2 subfamily.

It is found in the cytoplasm. Functionally, one of the essential components for the initiation of protein synthesis. Protects formylmethionyl-tRNA from spontaneous hydrolysis and promotes its binding to the 30S ribosomal subunits. Also involved in the hydrolysis of GTP during the formation of the 70S ribosomal complex. The polypeptide is Translation initiation factor IF-2 (Saccharophagus degradans (strain 2-40 / ATCC 43961 / DSM 17024)).